The primary structure comprises 545 residues: Chaperonin GroEL 2 (545 aa).

ATP is bound by residues 29-32 (TLGP), 86-90 (DGTTT), G413, 479-481 (NAA), and D495.

Belongs to the chaperonin (HSP60) family. In terms of assembly, forms a cylinder of 14 subunits composed of two heptameric rings stacked back-to-back. Interacts with the co-chaperonin GroES.

The protein resides in the cytoplasm. It catalyses the reaction ATP + H2O + a folded polypeptide = ADP + phosphate + an unfolded polypeptide.. In terms of biological role, together with its co-chaperonin GroES, plays an essential role in assisting protein folding. The GroEL-GroES system forms a nano-cage that allows encapsulation of the non-native substrate proteins and provides a physical environment optimized to promote and accelerate protein folding. In Prochlorococcus marinus (strain SARG / CCMP1375 / SS120), this protein is Chaperonin GroEL 2.